The following is a 137-amino-acid chain: Actin-depolymerizing factor 2 (137 aa).

The 133-residue stretch at 5–137 folds into the ADF-H domain; the sequence is ASGMAVHDDC…GLDVFKSRTN (133 aa). Position 6 is a phosphoserine (serine 6).

The protein belongs to the actin-binding proteins ADF family. In terms of assembly, interacts with AIP1-1.

It localises to the cytoplasm. The protein localises to the cytoskeleton. Functionally, actin-depolymerizing protein. Severs actin filaments (F-actin) and binds to actin monomers. Required for normal cell growth, plant development, cell organ expansion and flowering. Essential for root-knot nematode infection. This Arabidopsis thaliana (Mouse-ear cress) protein is Actin-depolymerizing factor 2 (ADF2).